Consider the following 123-residue polypeptide: Small ribosomal subunit protein uS12 (123 aa).

Position 89 is a 3-methylthioaspartic acid (aspartate 89).

The protein belongs to the universal ribosomal protein uS12 family. As to quaternary structure, part of the 30S ribosomal subunit. Contacts proteins S8 and S17. May interact with IF1 in the 30S initiation complex.

With S4 and S5 plays an important role in translational accuracy. Functionally, interacts with and stabilizes bases of the 16S rRNA that are involved in tRNA selection in the A site and with the mRNA backbone. Located at the interface of the 30S and 50S subunits, it traverses the body of the 30S subunit contacting proteins on the other side and probably holding the rRNA structure together. The combined cluster of proteins S8, S12 and S17 appears to hold together the shoulder and platform of the 30S subunit. The protein is Small ribosomal subunit protein uS12 of Rhodospirillum centenum (strain ATCC 51521 / SW).